The chain runs to 602 residues: Elongation factor 4 (602 aa).

In terms of domain architecture, tr-type G spans 7–189 (RNIRNFSIIA…AIVQRIPAPQ (183 aa)). GTP-binding positions include 19-24 (DHGKST) and 136-139 (NKID).

The protein belongs to the TRAFAC class translation factor GTPase superfamily. Classic translation factor GTPase family. LepA subfamily.

The protein resides in the cell inner membrane. The catalysed reaction is GTP + H2O = GDP + phosphate + H(+). Required for accurate and efficient protein synthesis under certain stress conditions. May act as a fidelity factor of the translation reaction, by catalyzing a one-codon backward translocation of tRNAs on improperly translocated ribosomes. Back-translocation proceeds from a post-translocation (POST) complex to a pre-translocation (PRE) complex, thus giving elongation factor G a second chance to translocate the tRNAs correctly. Binds to ribosomes in a GTP-dependent manner. The chain is Elongation factor 4 from Xylella fastidiosa (strain M23).